The chain runs to 510 residues: MTLWLPASGKIYLPPTPPVARVQSTDEYVERTDIYYHATSDRLLTVGHPYFDVRSQDGQKIEVPKVSGNQYRSFRVTFPDPNKFALADMSVYDPDKYRLVWACKGLEIGRGQPLGVGTTGHPLFNKVRDTENSSNYQNTSTDDRQNTSFDPKQVQMFIIGCTPCLGEYWDKAPVCDNAGDQTGLCPPLELKNSVIEDGDMFDIGFGNINNKTLSFNRSDVSLDIVNETCKYPDFLTMSNDVYGDSCFFFVRREQCYARHYFVRGGAVGDAIPDGTVNQNHNYYLPAKNGQGQRTLGNSTYFPTVSGSLVTSDAQLFNRPFWLQRAQGHNNGILWGNQMFVTVADNTRNTNFTISVSTENGGAQEYDSANIREYLRHVEEYQLSFILQLCKVPLNAEVLTQINAMNSGILENWQLGFVPTPDNSVHDTYRYITSKATKCPDAVPETEKEDPFGQYTFWNVDMTEKLSLDLDQYPLGRKFLFQAGLQTARTRAVKRPLVRKSSKSVKRKRTQ.

The tract at residues 128-147 (RDTENSSNYQNTSTDDRQNT) is disordered. Polar residues predominate over residues 132–147 (NSSNYQNTSTDDRQNT).

Belongs to the papillomaviridae L1 protein family. Self-assembles into homopentamers. The capsid has an icosahedral symmetry and consists of 72 capsomers, with each capsomer being a pentamer of L1. Interacts with the minor capsid protein L2; this interaction is necessary for viral genome encapsidation. Interacts with protein E2; this interaction enhances E2-dependent replication and transcription activation.

Its subcellular location is the virion. It localises to the host nucleus. Functionally, forms an icosahedral capsid with a T=7 symmetry and a 50 nm diameter. The capsid is composed of 72 pentamers linked to each other by disulfide bonds and associated with L2 proteins. Binds to heparan sulfate proteoglycans on cell surface of basal layer keratinocytes to provide initial virion attachment. This binding mediates a conformational change in the virus capsid that facilitates efficient infection. The virion enters the host cell via endocytosis. During virus trafficking, L1 protein dissociates from the viral DNA and the genomic DNA is released to the host nucleus. The virion assembly takes place within the cell nucleus. Encapsulates the genomic DNA together with protein L2. The polypeptide is Major capsid protein L1 (Human papillomavirus 38).